The chain runs to 338 residues: Adenylosuccinate synthetase (338 aa).

Residues 12 to 18 (GDEGKGK) and 42 to 44 (GHT) each bind GTP. Aspartate 13 functions as the Proton acceptor in the catalytic mechanism. Aspartate 13 and glycine 42 together coordinate Mg(2+). Residues 13–16 (DEGK), 40–43 (NAGH), threonine 127, arginine 141, glutamine 179, threonine 194, and arginine 256 contribute to the IMP site. The Proton donor role is filled by histidine 43. Residue 252 to 258 (TVTGRRR) participates in substrate binding. GTP contacts are provided by residues arginine 258, 284–286 (CLD), and 324–326 (STG).

This sequence belongs to the adenylosuccinate synthetase family. As to quaternary structure, homodimer. The cofactor is Mg(2+).

The protein resides in the cytoplasm. The enzyme catalyses IMP + L-aspartate + GTP = N(6)-(1,2-dicarboxyethyl)-AMP + GDP + phosphate + 2 H(+). It functions in the pathway purine metabolism; AMP biosynthesis via de novo pathway; AMP from IMP: step 1/2. Functionally, plays an important role in the de novo pathway of purine nucleotide biosynthesis. Catalyzes the first committed step in the biosynthesis of AMP from IMP. This Methanococcus maripaludis (strain C7 / ATCC BAA-1331) protein is Adenylosuccinate synthetase.